Reading from the N-terminus, the 486-residue chain is Palmitoleoyl-protein carboxylesterase notum2 (486 aa).

An N-terminal signal peptide occupies residues 1–18 (MRILEIFAILLILKEVRP). N183 carries an N-linked (GlcNAc...) asparagine glycan. Active-site charge relay system residues include S223, D331, and H380.

It belongs to the pectinacetylesterase family. Notum subfamily.

It is found in the secreted. It catalyses the reaction [Wnt protein]-O-(9Z)-hexadecenoyl-L-serine + H2O = [Wnt protein]-L-serine + (9Z)-hexadecenoate + H(+). Its function is as follows. Carboxylesterase that acts as a key negative regulator of the Wnt signaling pathway by specifically mediating depalmitoleoylation of WNT proteins. Serine palmitoleoylation of WNT proteins is required for efficient binding to frizzled receptors. This chain is Palmitoleoyl-protein carboxylesterase notum2, found in Xenopus laevis (African clawed frog).